Consider the following 233-residue polypeptide: Eukaryotic translation initiation factor 4E-1 (233 aa).

The segment at 1 to 51 (MVVEDALKTSASEDQAKTETNPKPREEDDEPEEGEIVGDEESASKPSKGIA) is disordered. Residues 14–26 (DQAKTETNPKPRE) are compositionally biased toward basic and acidic residues. A compositionally biased stretch (acidic residues) spans 27-41 (EDDEPEEGEIVGDEE). EIF4G-binding stretches follow at residues 55–58 (HALE) and 65–104 (FDSPAAKSAKTKQEDWGSSIRPIYTFSTVEEFWSIYNNIR). MRNA is bound by residues 76–81 (KQEDWG), Lys108, and 126–127 (WE). A disulfide bridge links Cys131 with Cys169. The EIF4G-binding stretch occupies residues 152–161 (YTLLGMIGEQ). MRNA-binding positions include 176–181 (RNRQEK) and 221–225 (MRHER).

It belongs to the eukaryotic initiation factor 4E family. As to quaternary structure, EIF4F is a multi-subunit complex, the composition of which varies with external and internal environmental conditions. It is composed of at least EIF4A, EIF4E and EIF4G. EIF4E is also known to interact with other partners. In higher plants two isoforms of EIF4F have been identified, named isoform EIF4F and isoform EIF(iso)4F. Isoform EIF4F has subunits p220 and p26, whereas isoform EIF(iso)4F has subunits p82 and p28. In terms of assembly, (Microbial infection) Does not interact with the VPg of Plum pox virus (PPV) strain D. According to the redox status, the Cys-131-Cys-169 disulfide bridge may have a role in regulating protein function by affecting its ability to bind capped mRNA. Mostly expressed in leaves, flower buds, leaf buds and anthers, to a lower extent in roots, stems and green immature fruit, and, at low levels, in petals.

The protein resides in the nucleus. The protein localises to the cytoplasm. Its function is as follows. Component of the protein complex eIF4F, which is involved in the recognition of the mRNA cap, ATP-dependent unwinding of 5'-terminal secondary structure and recruitment of mRNA to the ribosome. Recognizes and binds the 7-methylguanosine-containing mRNA cap during an early step in the initiation of protein synthesis and facilitates ribosome binding by inducing the unwinding of the mRNAs secondary structures. In terms of biological role, (Microbial infection) Not involved in the plum pox virus (PPV) strain D infection process. In Prunus domestica (Garden plum), this protein is Eukaryotic translation initiation factor 4E-1.